The primary structure comprises 40 residues: Antifungal protein ginkbilobin-1 (40 aa).

The Gnk2-homologous domain occupies 3–40 (TAFVSSAHNTQKIPAGAPFNRNLRAMLADLRQNAAFAG). Alpha-D-mannopyranose is bound at residue Asn11.

Expressed in seeds (at the protein level).

In terms of biological role, possesses antifungal activity against B.cinerea, M.arachidicola, F.oxysporum, R.solani and C.comatus and moderate antibacterial activity against S.aureus, P.aeruginosa and E.coli. Inhibits HIV-1 reverse transcriptase and proliferation of murine splenocytes. Exerts antifungal activity through its carbohydrate-binding specificity. The protein is Antifungal protein ginkbilobin-1 of Ginkgo biloba (Ginkgo).